Reading from the N-terminus, the 238-residue chain is tRNA (guanine-N(7)-)-methyltransferase (238 aa).

Residues 1-12 (MTDTAENQTPND) are compositionally biased toward polar residues. The segment at 1–20 (MTDTAENQTPNDRQAGHPRS) is disordered. The S-adenosyl-L-methionine site is built by Glu70, Asp95, Asp122, and Asp145. Asp145 is an active-site residue. Residues Lys149, Asp181, and 216–219 (TKFE) contribute to the substrate site.

Belongs to the class I-like SAM-binding methyltransferase superfamily. TrmB family.

The enzyme catalyses guanosine(46) in tRNA + S-adenosyl-L-methionine = N(7)-methylguanosine(46) in tRNA + S-adenosyl-L-homocysteine. It participates in tRNA modification; N(7)-methylguanine-tRNA biosynthesis. Its function is as follows. Catalyzes the formation of N(7)-methylguanine at position 46 (m7G46) in tRNA. This chain is tRNA (guanine-N(7)-)-methyltransferase, found in Neisseria meningitidis serogroup C (strain 053442).